The following is a 136-amino-acid chain: Protein PsiE (136 aa).

4 helical membrane passes run Ile15–Leu35, Tyr55–Val75, Phe82–Ile102, and Pro108–Cys128.

The protein belongs to the PsiE family.

It is found in the cell inner membrane. This chain is Protein PsiE, found in Escherichia coli (strain SE11).